We begin with the raw amino-acid sequence, 162 residues long: E3 ubiquitin-protein ligase LAP (162 aa).

The Cytoplasmic portion of the chain corresponds to 1–78; sequence MEGSDNTNTH…RWKCSFMYCN (78 aa). Residues 3 to 61 form an RING-CH-type zinc finger; sequence GSDNTNTHCWICKDEYNVSTNFCNCKNEFKIVHKNCLEEWINFSHNTKCKICNGKYNIK. Zn(2+) is bound by residues C11, C14, C25, C27, H35, C38, C51, and C54. The chain crosses the membrane as a helical span at residues 79–99; the sequence is VPAICVSLICLLLLPLTILLV. At 100 to 121 the chain is on the lumenal side; that stretch reads KFNLKSMLENIENRDLIALISA. A helical transmembrane segment spans residues 122–142; that stretch reads MAYSLPCVVGFITVVHILIAL. Topologically, residues 143–162 are cytoplasmic; sequence YDYYLAAKSDNTTYQVYEYI.

It belongs to the poxviridae LAP protein family.

It localises to the host membrane. The protein localises to the host Golgi apparatus. It is found in the host trans-Golgi network membrane. Its subcellular location is the host early endosome membrane. It catalyses the reaction S-ubiquitinyl-[E2 ubiquitin-conjugating enzyme]-L-cysteine + [acceptor protein]-L-lysine = [E2 ubiquitin-conjugating enzyme]-L-cysteine + N(6)-ubiquitinyl-[acceptor protein]-L-lysine.. Functionally, E3 ubiquitin-protein ligase which promotes ubiquitination and subsequent degradation of host MHC-I and CD4 molecules, presumably to prevent lysis of infected cells by cytotoxic T-lymphocytes and NK cell. Binds target molecules through transmembrane interaction. The result of this ubiquitination is the enhancement of the endocytosis of the target chain and the delivery to the lysosome, where it is proteolytically destroyed. This chain is E3 ubiquitin-protein ligase LAP (LW010), found in Lumpy skin disease virus (LSDV).